The primary structure comprises 476 residues: Beta-xylosidase (476 aa).

Residue Glu188 is the Proton donor of the active site. The active-site Nucleophile is Glu292. Asn468 carries an N-linked (GlcNAc...) asparagine glycan.

It belongs to the glycosyl hydrolase 5 (cellulase A) family.

Its subcellular location is the secreted. It carries out the reaction Hydrolysis of (1-&gt;4)-beta-D-xylans, to remove successive D-xylose residues from the non-reducing termini.. Functionally, catalyzes the hydrolysis of xylo-oligomers to xylose units and plays an important role in xylan degradation. Can also perform the transglycosylation of xylose and alcohol. Has no endoglucanase activity. The sequence is that of Beta-xylosidase from Phanerodontia chrysosporium (White-rot fungus).